We begin with the raw amino-acid sequence, 199 residues long: Pneumococcal vaccine antigen A homolog (199 aa).

Its subcellular location is the cell surface. This chain is Pneumococcal vaccine antigen A homolog (pvaA), found in Streptococcus pyogenes serotype M3 (strain ATCC BAA-595 / MGAS315).